We begin with the raw amino-acid sequence, 85 residues long: Large ribosomal subunit protein bL27 (85 aa).

Belongs to the bacterial ribosomal protein bL27 family.

The chain is Large ribosomal subunit protein bL27 from Pseudomonas aeruginosa (strain LESB58).